The sequence spans 105 residues: N(4)-acetylcytidine amidohydrolase (105 aa).

Residues 7-93 (TFFERFEHDI…VIAEIYPGLE (87 aa)) enclose the ASCH domain. Lysine 21 functions as the Proton acceptor in the catalytic mechanism. The active-site Nucleophile is the threonine 24. Catalysis depends on glutamate 74, which acts as the Proton donor.

This sequence belongs to the N(4)-acetylcytidine amidohydrolase family.

It carries out the reaction N(4)-acetylcytidine + H2O = cytidine + acetate + H(+). The enzyme catalyses N(4)-acetyl-2'-deoxycytidine + H2O = 2'-deoxycytidine + acetate + H(+). It catalyses the reaction N(4)-acetylcytosine + H2O = cytosine + acetate + H(+). Functionally, catalyzes the hydrolysis of N(4)-acetylcytidine (ac4C). In Shewanella baltica (strain OS195), this protein is N(4)-acetylcytidine amidohydrolase.